A 558-amino-acid polypeptide reads, in one-letter code: Dihydroxy-acid dehydratase (558 aa).

Asp78 provides a ligand contact to Mg(2+). Cys119 is a [2Fe-2S] cluster binding site. Mg(2+)-binding residues include Asp120 and Lys121. Lys121 is modified (N6-carboxylysine). Residue Cys192 participates in [2Fe-2S] cluster binding. A Mg(2+)-binding site is contributed by Glu446. Ser472 functions as the Proton acceptor in the catalytic mechanism.

The protein belongs to the IlvD/Edd family. As to quaternary structure, homodimer. [2Fe-2S] cluster serves as cofactor. It depends on Mg(2+) as a cofactor.

The catalysed reaction is (2R)-2,3-dihydroxy-3-methylbutanoate = 3-methyl-2-oxobutanoate + H2O. The enzyme catalyses (2R,3R)-2,3-dihydroxy-3-methylpentanoate = (S)-3-methyl-2-oxopentanoate + H2O. It participates in amino-acid biosynthesis; L-isoleucine biosynthesis; L-isoleucine from 2-oxobutanoate: step 3/4. Its pathway is amino-acid biosynthesis; L-valine biosynthesis; L-valine from pyruvate: step 3/4. Functionally, functions in the biosynthesis of branched-chain amino acids. Catalyzes the dehydration of (2R,3R)-2,3-dihydroxy-3-methylpentanoate (2,3-dihydroxy-3-methylvalerate) into 2-oxo-3-methylpentanoate (2-oxo-3-methylvalerate) and of (2R)-2,3-dihydroxy-3-methylbutanoate (2,3-dihydroxyisovalerate) into 2-oxo-3-methylbutanoate (2-oxoisovalerate), the penultimate precursor to L-isoleucine and L-valine, respectively. The polypeptide is Dihydroxy-acid dehydratase (Campylobacter jejuni subsp. jejuni serotype O:23/36 (strain 81-176)).